Consider the following 387-residue polypeptide: MEQSQSQRQAWPSSSAGGGKAQDSGVLTREDFDGGPVSIDEVDTGLFLGNLTAATHMETLRSFKITHILTLDSVPLPQHILEASFLTTKYIQIADMPREDILQHLEGCVDFISSALAQQGNVLVHCYFGVSRSSSTVIAYMMKRHNLDFLPAYELVKAKRRFVQPNAGFVSQLKLFRRMGCKIDPNCQRYKIHRLRLAGEQMRKAKILPQSFHSVVRPDPDITRENPEPIVFRCRRCRRVLASKSHVLEHKPRDRPPQEVVPKEKEEVAAAKLPAQSHDQAENHHGARMLEQLSERIRQSSLGSPGHESTPNYCRSILFVEPIAWMHRIMLNTQGRLYCPKCEQKLGNFSWINACKCPCGETMTPAFYLIPSKVELSKAVQNVQTTV.

Over residues 1-15 the composition is skewed to polar residues; sequence MEQSQSQRQAWPSSS. The tract at residues 1 to 27 is disordered; sequence MEQSQSQRQAWPSSSAGGGKAQDSGVL. Positions 35–182 constitute a Tyrosine-protein phosphatase domain; it reads GPVSIDEVDT…LKLFRRMGCK (148 aa). Cys-126 acts as the Phosphocysteine intermediate in catalysis. Positions 248–267 are disordered; sequence LEHKPRDRPPQEVVPKEKEE.

It belongs to the protein-tyrosine phosphatase family. Non-receptor class dual specificity subfamily. Interacts (via tyrosine-protein phosphatase domain) with bsk/JNK; the interaction dephosphorylates bsk.

The protein localises to the nucleus. It localises to the cytoplasm. It carries out the reaction O-phospho-L-tyrosyl-[protein] + H2O = L-tyrosyl-[protein] + phosphate. The catalysed reaction is O-phospho-L-seryl-[protein] + H2O = L-seryl-[protein] + phosphate. It catalyses the reaction O-phospho-L-threonyl-[protein] + H2O = L-threonyl-[protein] + phosphate. Inhibited by the tyrosine phosphatase inhibitor sodium vanadate. Its function is as follows. Dual specificity phosphatase; can dephosphorylate both phosphotyrosine and phosphoserine or phosphothreonine residues. May suppress bsk/JNK activation during the immune response. In Drosophila melanogaster (Fruit fly), this protein is Dual specificity protein phosphatase MPK-4.